Consider the following 185-residue polypeptide: MATPGNVTFKNTHDSWGMNWGLCDSSEQMLTMQGMPWIMRKLASWISVTVVIKTWTDPETGETRFLLQHNPPMGLPGMSEERALDYVPDELTVPNLGKLRVRTRWGTAKELDQLDKYLARGLEKGPHSMIHMMTEHLDIDAVTHQIFGYEEIDGTRYHVRRIVVRKGHEVARLRLVYNYLGPRAG.

It belongs to the pericyclase pydY family.

It functions in the pathway mycotoxin biosynthesis. Its function is as follows. Pericyclase; part of the gene cluster that mediates the biosynthesis of pyrrocidines, fungal natural products containing a macrocyclic para-cyclophane connected to a decahydrofluorene ring system that show potent antibiotic activities toward Gram-negative bacteria. Within the pathway, pydY is involved in the late Diels-Alder cycloaddition step that leads to the formation of the decahydrofluorene core. The pathway begins with the PKS-NRPS pydA which, with the help of the trans-enoyl reductase pydC, synthesizes the polyketide-tyrosyl acyl thioester product which can be reductively off-loaded by the terminal reductase (R) domain in pydA. The alpha/beta hydrolase pydG is then required to catalyze the subsequent Knoevenagel condensation that affords the 3-pyrrolin-2-one ring, whereas the four proteins pydB, pydE, pydX and pydZ then function synergistically to form the cyclophane. PydB and the membrane-bound pydX and pydZ are lipid-binding proteins that can sequester and mold the pdyG product into the inverse S-shape. Binding of the medium chain reductase pydE to the complex would trigger the cascade oxidative cyclization. PydY is involved in the Diels-Alder cycloaddition that forms the decahydrofluorene core. Additional non-enzymatic hydroxylation yields pyrrocidine A2 which can be further reduced into pyrrocidine B by an endogenous reductase. This is Pericyclase pydY from Acremonium sp.